A 260-amino-acid polypeptide reads, in one-letter code: Putative imidazole glycerol phosphate synthase subunit hisF3 (260 aa).

Residue D135 is part of the active site.

Belongs to the HisA/HisF family. In terms of assembly, heterodimer of HisH and HisF.

Its subcellular location is the cytoplasm. It carries out the reaction 5-[(5-phospho-1-deoxy-D-ribulos-1-ylimino)methylamino]-1-(5-phospho-beta-D-ribosyl)imidazole-4-carboxamide + L-glutamine = D-erythro-1-(imidazol-4-yl)glycerol 3-phosphate + 5-amino-1-(5-phospho-beta-D-ribosyl)imidazole-4-carboxamide + L-glutamate + H(+). It functions in the pathway amino-acid biosynthesis; L-histidine biosynthesis; L-histidine from 5-phospho-alpha-D-ribose 1-diphosphate: step 5/9. IGPS catalyzes the conversion of PRFAR and glutamine to IGP, AICAR and glutamate. The HisF subunit catalyzes the cyclization activity that produces IGP and AICAR from PRFAR using the ammonia provided by the HisH subunit. This is Putative imidazole glycerol phosphate synthase subunit hisF3 (hisF3) from Vibrio vulnificus (strain YJ016).